Consider the following 188-residue polypeptide: Elongation factor P (188 aa).

This sequence belongs to the elongation factor P family.

The protein localises to the cytoplasm. Its pathway is protein biosynthesis; polypeptide chain elongation. Its function is as follows. Involved in peptide bond synthesis. Stimulates efficient translation and peptide-bond synthesis on native or reconstituted 70S ribosomes in vitro. Probably functions indirectly by altering the affinity of the ribosome for aminoacyl-tRNA, thus increasing their reactivity as acceptors for peptidyl transferase. This chain is Elongation factor P, found in Bdellovibrio bacteriovorus (strain ATCC 15356 / DSM 50701 / NCIMB 9529 / HD100).